Reading from the N-terminus, the 467-residue chain is Dynactin subunit 4 (467 aa).

A2 bears the N-acetylalanine mark. A Glycyl lysine isopeptide (Lys-Gly) (interchain with G-Cter in SUMO2) cross-link involves residue K222. T414 carries the post-translational modification Phosphothreonine.

It belongs to the dynactin subunit 4 family. As to quaternary structure, subunit of dynactin, a multiprotein complex part of a tripartite complex with dynein and a adapter, such as BICDL1, BICD2 or HOOK3. The dynactin complex is built around ACTR1A/ACTB filament and consists of an actin-related filament composed of a shoulder domain, a pointed end and a barbed end. Its length is defined by its flexible shoulder domain. The soulder is composed of 2 DCTN1 subunits, 4 DCTN2 and 2 DCTN3. The 4 DCNT2 (via N-terminus) bind the ACTR1A filament and act as molecular rulers to determine the length. The pointed end is important for binding dynein-dynactin cargo adapters. Consists of 4 subunits: ACTR10, DCNT4, DCTN5 and DCTN6. The barbed end is composed of a CAPZA1:CAPZB heterodimers, which binds ACTR1A/ACTB filament and dynactin and stabilizes dynactin. Interacts with ATP7B, but not ATP7A, in a copper-dependent manner. Interacts with ANK2; this interaction is required for localization at costameres. Interacts with N4BP2L1.

Its subcellular location is the cytoplasm. It localises to the cytoskeleton. The protein localises to the microtubule organizing center. The protein resides in the centrosome. It is found in the stress fiber. Its subcellular location is the cell cortex. It localises to the myofibril. The protein localises to the sarcomere. Its function is as follows. Part of the dynactin complex that activates the molecular motor dynein for ultra-processive transport along microtubules. Together with dynein is involved in spindle assembly and cytokinesis. The protein is Dynactin subunit 4 (DCTN4) of Sus scrofa (Pig).